We begin with the raw amino-acid sequence, 99 residues long: Plastocyanin (99 aa).

The Plastocyanin-like domain occupies 1 to 99; it reads IEIKLGGDDG…AGMVGKVTVQ (99 aa). Residues histidine 37, cysteine 84, histidine 87, and methionine 92 each contribute to the Cu cation site.

It belongs to the plastocyanin family. Cu(2+) serves as cofactor.

The protein localises to the plastid. The protein resides in the chloroplast thylakoid membrane. Its function is as follows. Participates in electron transfer between P700 and the cytochrome b6-f complex in photosystem I. The polypeptide is Plastocyanin (PETE) (Rumex obtusifolius (Bitter dock)).